A 416-amino-acid chain; its full sequence is UDP-N-acetylglucosamine 1-carboxyvinyltransferase (416 aa).

Phosphoenolpyruvate is bound at residue 22–23; sequence KN. Arg-92 is a binding site for UDP-N-acetyl-alpha-D-glucosamine. The Proton donor role is filled by Cys-116. Cys-116 is subject to 2-(S-cysteinyl)pyruvic acid O-phosphothioketal. Residues 121–125, Asp-304, and Ile-326 contribute to the UDP-N-acetyl-alpha-D-glucosamine site; that span reads RPVDQ.

The protein belongs to the EPSP synthase family. MurA subfamily.

The protein localises to the cytoplasm. It carries out the reaction phosphoenolpyruvate + UDP-N-acetyl-alpha-D-glucosamine = UDP-N-acetyl-3-O-(1-carboxyvinyl)-alpha-D-glucosamine + phosphate. It functions in the pathway cell wall biogenesis; peptidoglycan biosynthesis. In terms of biological role, cell wall formation. Adds enolpyruvyl to UDP-N-acetylglucosamine. This chain is UDP-N-acetylglucosamine 1-carboxyvinyltransferase, found in Cupriavidus taiwanensis (strain DSM 17343 / BCRC 17206 / CCUG 44338 / CIP 107171 / LMG 19424 / R1) (Ralstonia taiwanensis (strain LMG 19424)).